Here is a 629-residue protein sequence, read N- to C-terminus: 5-aminolevulinate synthase, mitochondrial (629 aa).

The transit peptide at 1–69 (MDSVLRQSKA…VQSARTGGRA (69 aa)) directs the protein to the mitochondrion. Arg155, Ser268, and Lys287 together coordinate substrate. Residues Ser320, His348, and Thr388 each contribute to the pyridoxal 5'-phosphate site. The active site involves Lys391. Lys391 carries the N6-(pyridoxal phosphate)lysine modification. Pyridoxal 5'-phosphate is bound by residues Thr420 and Thr421. Thr506 provides a ligand contact to substrate.

Belongs to the class-II pyridoxal-phosphate-dependent aminotransferase family. Homodimer. The cofactor is pyridoxal 5'-phosphate.

It localises to the mitochondrion matrix. The catalysed reaction is succinyl-CoA + glycine + H(+) = 5-aminolevulinate + CO2 + CoA. The protein operates within porphyrin-containing compound metabolism; protoporphyrin-IX biosynthesis; 5-aminolevulinate from glycine: step 1/1. Functionally, catalyzes the synthesis of 5-aminolevulinate (ALA) from succinyl-CoA and glycine, the first and rate-limiting step in heme biosynthesis. This Neurospora crassa (strain ATCC 24698 / 74-OR23-1A / CBS 708.71 / DSM 1257 / FGSC 987) protein is 5-aminolevulinate synthase, mitochondrial (alv-1).